The chain runs to 148 residues: Ubiquitin-conjugating enzyme E2 8 (148 aa).

One can recognise a UBC core domain in the interval 1 to 147 (MASKRILKEL…ARNWTQKYAM (147 aa)). The Glycyl thioester intermediate role is filled by C85.

Belongs to the ubiquitin-conjugating enzyme family. In terms of assembly, interacts with CIP8, CHIP, NLA and XERICO. Highest expression in young stems, old leaves. Lowest levels in floral buds, anthers and young leaves.

It carries out the reaction S-ubiquitinyl-[E1 ubiquitin-activating enzyme]-L-cysteine + [E2 ubiquitin-conjugating enzyme]-L-cysteine = [E1 ubiquitin-activating enzyme]-L-cysteine + S-ubiquitinyl-[E2 ubiquitin-conjugating enzyme]-L-cysteine.. It participates in protein modification; protein ubiquitination. Its function is as follows. Accepts the ubiquitin from the E1 complex and catalyzes its covalent attachment to other proteins. Mediates the selective degradation of short-lived and abnormal proteins. The chain is Ubiquitin-conjugating enzyme E2 8 (UBC8) from Arabidopsis thaliana (Mouse-ear cress).